The following is a 261-amino-acid chain: Calbindin (261 aa).

An N-acetylalanine modification is found at Ala2. Residues 2–7 form an interaction with RANBP9 region; sequence AESHLQ. EF-hand domains lie at 11 to 46, 53 to 88, 98 to 133, 142 to 177, and 186 to 221; these read ITAS…LLQA, ELSP…EENF, KSCE…LLEK, KLAE…QENF, and MCGK…LCEK. Positions 24, 26, 28, 30, and 35 each coordinate Ca(2+). Positions 111, 113, 115, 122, 155, 157, 159, 161, 166, 199, 201, 203, 205, and 210 each coordinate Ca(2+).

Belongs to the calbindin family. As to quaternary structure, interacts with RANBP9.

Buffers cytosolic calcium. May stimulate a membrane Ca(2+)-ATPase and a 3',5'-cyclic nucleotide phosphodiesterase. This is Calbindin (Calb1) from Rattus norvegicus (Rat).